Reading from the N-terminus, the 612-residue chain is Dihydroxy-acid dehydratase (612 aa).

Residue aspartate 81 coordinates Mg(2+). Residue cysteine 122 participates in [2Fe-2S] cluster binding. Mg(2+) is bound by residues aspartate 123 and lysine 124. Position 124 is an N6-carboxylysine (lysine 124). Residue cysteine 193 participates in [2Fe-2S] cluster binding. Glutamate 489 is a binding site for Mg(2+). Residue serine 515 is the Proton acceptor of the active site.

It belongs to the IlvD/Edd family. As to quaternary structure, homodimer. Requires [2Fe-2S] cluster as cofactor. It depends on Mg(2+) as a cofactor.

It carries out the reaction (2R)-2,3-dihydroxy-3-methylbutanoate = 3-methyl-2-oxobutanoate + H2O. The catalysed reaction is (2R,3R)-2,3-dihydroxy-3-methylpentanoate = (S)-3-methyl-2-oxopentanoate + H2O. It functions in the pathway amino-acid biosynthesis; L-isoleucine biosynthesis; L-isoleucine from 2-oxobutanoate: step 3/4. It participates in amino-acid biosynthesis; L-valine biosynthesis; L-valine from pyruvate: step 3/4. Functionally, functions in the biosynthesis of branched-chain amino acids. Catalyzes the dehydration of (2R,3R)-2,3-dihydroxy-3-methylpentanoate (2,3-dihydroxy-3-methylvalerate) into 2-oxo-3-methylpentanoate (2-oxo-3-methylvalerate) and of (2R)-2,3-dihydroxy-3-methylbutanoate (2,3-dihydroxyisovalerate) into 2-oxo-3-methylbutanoate (2-oxoisovalerate), the penultimate precursor to L-isoleucine and L-valine, respectively. This chain is Dihydroxy-acid dehydratase, found in Stenotrophomonas maltophilia (strain K279a).